The primary structure comprises 258 residues: L-aspartate dehydrogenase 1 (258 aa).

Residues A121 and N181 each contribute to the NAD(+) site. H211 is a catalytic residue.

The protein belongs to the L-aspartate dehydrogenase family.

The catalysed reaction is L-aspartate + NADP(+) + H2O = oxaloacetate + NH4(+) + NADPH + H(+). The enzyme catalyses L-aspartate + NAD(+) + H2O = oxaloacetate + NH4(+) + NADH + H(+). It participates in cofactor biosynthesis; NAD(+) biosynthesis; iminoaspartate from L-aspartate (dehydrogenase route): step 1/1. In terms of biological role, specifically catalyzes the NAD or NADP-dependent dehydrogenation of L-aspartate to iminoaspartate. In Bordetella bronchiseptica (strain ATCC BAA-588 / NCTC 13252 / RB50) (Alcaligenes bronchisepticus), this protein is L-aspartate dehydrogenase 1.